We begin with the raw amino-acid sequence, 301 residues long: Glutamyl-Q tRNA(Asp) synthetase (301 aa).

L-glutamate-binding positions include 8 to 12 and Glu-44; that span reads RFAPS. Positions 11 to 21 match the 'HIGH' region motif; the sequence is PSPTGPLHFGS. Residues Cys-100, Cys-102, Tyr-122, and Cys-126 each contribute to the Zn(2+) site. Positions 180 and 198 each coordinate L-glutamate. The 'KMSKS' region motif lies at 236 to 240; sequence KLSKQ. Lys-239 contributes to the ATP binding site.

This sequence belongs to the class-I aminoacyl-tRNA synthetase family. GluQ subfamily. Zn(2+) is required as a cofactor.

Its function is as follows. Catalyzes the tRNA-independent activation of glutamate in presence of ATP and the subsequent transfer of glutamate onto a tRNA(Asp). Glutamate is transferred on the 2-amino-5-(4,5-dihydroxy-2-cyclopenten-1-yl) moiety of the queuosine in the wobble position of the QUC anticodon. The protein is Glutamyl-Q tRNA(Asp) synthetase of Dechloromonas aromatica (strain RCB).